A 1349-amino-acid polypeptide reads, in one-letter code: Adhesion G protein-coupled receptor F5 (1349 aa).

Positions 1 to 24 (MKSSRTVTLYFVLIVICSSEATWS) are cleaved as a signal peptide. Residues 25–1016 (RPAEPIVHPL…PGSLLKILLD (992 aa)) are Extracellular-facing. Asn-73, Asn-94, Asn-185, Asn-254, Asn-270, Asn-286, Asn-299, Asn-326, Asn-337, Asn-349, Asn-396, Asn-470, Asn-503, Asn-538, Asn-649, and Asn-666 each carry an N-linked (GlcNAc...) asparagine glycan. The 109-residue stretch at 163–271 (PETYITLKIK…NSFQGTPSNE (109 aa)) folds into the SEA domain. 3 consecutive Ig-like domains span residues 268 to 366 (PSNE…LDVT), 367 to 464 (PIRI…IAVT), and 469 to 559 (ANLT…KDVT). Cysteines 291 and 348 form a disulfide. Cys-389 and Cys-447 are oxidised to a cystine. Residues Cys-490 and Cys-543 are joined by a disulfide bond. Ser-819 carries the phosphoserine modification. N-linked (GlcNAc...) asparagine glycosylation is found at Asn-820, Asn-958, and Asn-963. The 165-residue stretch at 842-1006 (TPPFLFHPNV…SILMSPDSPD (165 aa)) folds into the GAIN-B domain. 2 disulfide bridges follow: Cys-954–Cys-988 and Cys-973–Cys-990. Residues 954–1006 (CVFWNFSLANNTGGWDSSGCTVEDDGRDNRDRVFCKCNHLTSFSILMSPDSPD) are GPS. The tethered agonist stretch occupies residues 994–1009 (TSFSILMSPDSPDPGS). The helical transmembrane segment at 1017-1036 (IISYIGLGFSIVSLAACLVV) threads the bilayer. Topologically, residues 1037–1055 (EAMVWKSVTKNRTSYMRHI) are cytoplasmic. A helical membrane pass occupies residues 1056–1078 (CIVNIALCLLIADIWFIVAGAIH). The Extracellular portion of the chain corresponds to 1079 to 1097 (DGHYPLNETACVAATFFIH). The N-linked (GlcNAc...) asparagine glycan is linked to Asn-1085. A helical transmembrane segment spans residues 1098–1120 (FFYLSVFFWMLTLGLMLFYRLIF). Residues 1121-1131 (ILHDASKSTQK) are Cytoplasmic-facing. Residues 1132–1154 (AIAFSLGYGCPLIISSITVGVTQ) form a helical membrane-spanning segment. Residues 1155-1173 (PQEVYMRKNACWLNWEDTR) lie on the Extracellular side of the membrane. The chain crosses the membrane as a helical span at residues 1174–1196 (ALLAFAIPALIIVVVNVSITVVV). The Cytoplasmic segment spans residues 1197 to 1216 (ITKILRPSVGDKPGKQEKSS). Residues 1217–1239 (LFQISKSIGVLTPLLGLTWGFGL) traverse the membrane as a helical segment. The Extracellular portion of the chain corresponds to 1240–1248 (ATVIQGSNA). Residues 1249-1271 (VFHIIFTLLNAFQGLFILLFGCL) traverse the membrane as a helical segment. Residues 1272–1349 (WDQKVQEALL…NSSSAYSLLN (78 aa)) lie on the Cytoplasmic side of the membrane. At Thr-1303 the chain carries Phosphothreonine. Ser-1310 is modified (phosphoserine). Residues 1329 to 1343 (STPETTSSSVENSSS) show a composition bias toward low complexity. Positions 1329–1349 (STPETTSSSVENSSSAYSLLN) are disordered.

It belongs to the G-protein coupled receptor 2 family. Adhesion G-protein coupled receptor (ADGR) subfamily. Homodimer; disulfide-linked. Heterodimer of 2 chains generated by proteolytic processing; the large extracellular N-terminal fragment and the membrane-bound C-terminal fragment predominantly remain associated and non-covalently linked. Fragment generates by the processing enzyme furin remains attached to the extracellular N-terminal fragment. Interacts (via N-terminal extracellular domain) with SFTPD. Post-translationally, highly glycosylated. Proteolytically cleaved at multiple sites: one in the GPS region of the GAIN-B domain (S1 site) and the other in the SEA domain (S2 site). The proteolytic cleavage at S1 site generates an extracellular subunit and a seven-transmembrane subunit. The proteolytic cleavage at S2 site generates a fragment that undergoes proteolytic cleavage by the processing enzyme furin. In terms of tissue distribution, highly expressed in the lung and to a much lesser extent in the kidney and heart. Dense localization in alveolar walls of the lung and in the intercalated cells of the collecting duct of the kidney.

The protein localises to the cell membrane. With respect to regulation, as an adhesion G protein-coupled receptor (aGPCR) exhibits a large N-terminal extracellular domain containing highly conserved GPCR autoproteolysis-inducing (GAIN) domain. During synthesis, intracellular autoproteolytic processing of nascent chain within the GAIN domain generates a mature protein, consisting of an N-terminal fragment that is non-covalently linked to the C-terminal fragment. The mature protein is routed to the plasma membrane where the N- and C-terminal fragments remain associated, forming the holoreceptor. Dissociation of the aGPCR fragments stimulates G protein signaling through the action of the tethered-peptide agonist stalk that is occluded within the GAIN domain in the holoreceptor form. This dissociation might be induced by ligand binding, such as that of sFNDC4. Receptor that plays a critical role in lung surfactant homeostasis. May play a role in controlling adipocyte function. In terms of biological role, adhesion G protein-coupled receptor. In alveolar type II (ATII or AT2) cells, required for normal lung surfactant homeostasis. Modulation of both surfactant secretion and uptake by ATII cells is mediated by the downstream activation of GNAQ/GNA11 proteins and may be a consequence of increased cortical F-actin assembly induced by ADGRF5 activation. In the kidney, may play a role in the regulation of acid excretion into the primary urine, possibly by regulating the surface expression of V-ATPase proton pump. As a receptor for soluble FNDC4 (sFNDC4), required for proper systemic glucose tolerance, specifically sensitizing white adipose tissue to insulin. Also plays a role in sFNDC4-induced decrease of local inflammation in white adipose tissue. This Rattus norvegicus (Rat) protein is Adhesion G protein-coupled receptor F5 (Adgrf5).